The primary structure comprises 287 residues: Pentatricopeptide repeat-containing protein At4g18975, chloroplastic (287 aa).

Residues 1 to 34 (MALCNLNPTQGIFPLQGLSKSQEFICFSLLQSPR) constitute a chloroplast transit peptide. PPR repeat units lie at residues 165–199 (TMGT…HTRS) and 201–235 (PRRL…KVSP).

Belongs to the PPR family. P subfamily.

It localises to the plastid. The protein localises to the chloroplast. This is Pentatricopeptide repeat-containing protein At4g18975, chloroplastic from Arabidopsis thaliana (Mouse-ear cress).